Here is a 395-residue protein sequence, read N- to C-terminus: Putative phosphatidate cytidylyltransferase (395 aa).

9 consecutive transmembrane segments (helical) span residues 13 to 33 (STVF…SAFA), 78 to 98 (FAFG…MNWE), 115 to 135 (SLLS…VIYF), 144 to 164 (WIWT…YMIS), 177 to 197 (IYSL…YFSV), 201 to 221 (WTTI…AYLF), 242 to 262 (AFFG…LYSI), 306 to 326 (FYIY…IFAI), and 358 to 378 (FDSS…AGIS).

The protein belongs to the CDS family.

It localises to the cell membrane. The enzyme catalyses a 1,2-diacyl-sn-glycero-3-phosphate + CTP + H(+) = a CDP-1,2-diacyl-sn-glycerol + diphosphate. It participates in phospholipid metabolism; CDP-diacylglycerol biosynthesis; CDP-diacylglycerol from sn-glycerol 3-phosphate: step 3/3. This chain is Putative phosphatidate cytidylyltransferase (cdsA), found in Mycoplasma pneumoniae (strain ATCC 29342 / M129 / Subtype 1) (Mycoplasmoides pneumoniae).